Here is a 187-residue protein sequence, read N- to C-terminus: UPF0301 protein YqgE (187 aa).

It belongs to the UPF0301 (AlgH) family.

The protein is UPF0301 protein YqgE of Escherichia coli O7:K1 (strain IAI39 / ExPEC).